A 351-amino-acid chain; its full sequence is Protein MSS2, mitochondrial (351 aa).

TPR repeat units lie at residues His155 to Thr188 and Lys260 to Glu294.

Interacts with COX18.

Its subcellular location is the mitochondrion inner membrane. Required to stabilize mitochondrial cytochrome C oxidase subunit 2 (COX2) and to translocate the C-terminal domain of COX2 through the inner membrane. This chain is Protein MSS2, mitochondrial (MSS2), found in Saccharomyces cerevisiae (strain ATCC 204508 / S288c) (Baker's yeast).